The chain runs to 495 residues: tRNA-guanine(15) transglycosylase (495 aa).

The active-site Nucleophile is the D83. D118 is a binding site for substrate. Positions 273 and 278 each coordinate Zn(2+).

This sequence belongs to the archaeosine tRNA-ribosyltransferase family. Requires Zn(2+) as cofactor.

It catalyses the reaction guanosine(15) in tRNA + 7-cyano-7-deazaguanine = 7-cyano-7-carbaguanosine(15) in tRNA + guanine. The protein operates within tRNA modification; archaeosine-tRNA biosynthesis. Exchanges the guanine residue with 7-cyano-7-deazaguanine (preQ0) at position 15 in the dihydrouridine loop (D-loop) of archaeal tRNAs. The sequence is that of tRNA-guanine(15) transglycosylase from Pyrobaculum aerophilum (strain ATCC 51768 / DSM 7523 / JCM 9630 / CIP 104966 / NBRC 100827 / IM2).